The sequence spans 1377 residues: MEDIFNFFDKPKDPLHFSAIRISVSSPEKIRERSFGEVKKPETINYRTFKPERDGLFCAKIFGPTKDYECNCGKYKRMKHRGIVCEKCGVEVIPSKVRRERLGHIDLATPVAHIWFLKSLPSRIGNLMDITLKDLEKVLYFEAYVVTDPKNTGMPFAQVFSEDQYLKAMEEYNGQFEAGMGAAAIRECLMSMDLDVLAEQLRVEMLEATSEAKRKKTAKRLKVVEAFKSSGNKPEWMILECIPVLPPELRPLVPLDGGRFATSDLNDLYRRVINRNNRLKRLMELQAPEVIIRNEKRMLQEAVDALFDNGRRGRAIAGPNKRPLKSLSDMLKGKSGRFRQNLLGKRVDYSGRSVIVVGPELRLHQCGLPKKMALELFKPFIYNKLEEKGFVTTIKSAKKMVEKERPEVWDVLEEVIKEHPVMLNRAPTLHRLGIQAFEPVLIEGKAIQLHPLVCTAFNADFDGDQMAVHLPLSVESQVETRVLMMSTNNILSPAHGKPIIVPSQDMVLGIYYMTREKFFAKGDGKIFASQDEVRIALDADEVDLQARVKVRLKNLATDEKPQLVDTTPGRVVLREILPDEVPFATINKVMTKKELSNLVDVCYRLAGNKETVILADKLKSIGFRYSTIAGISISINDMVIPEGKTAIINRASEDVKEIQNQYTEGLITDGERYNKVIDIWAKSTEEIAKEMLDNLSRDIVHAPDGKEVKVPSFNAIHMMADSGARGSAQQIRQLAGMRGLMAKPSGEIIETPITANFREGLTVLQYFISTHGARKGLADTALKTANSGYLTRRLVDVAQDAIITEPDCGTLDGLVVSSLTEGGEIIEHIGDRILGRVALDDILDPVTGDVLVASNEEIDETLVQKIESAGLEKVKIRSVLTCQSRRGICAKCYGRDLARGHLVNMGEAVGVIAAQSIGEPGTQLTMRTFHIGGTASRRAEQTSLEARTEGSVKFININYVTNTDGHHIVMNRNGELAIVDETGREREKYSILYGAKIKVNVGQVIKQGEAIAEWDPYTMPILTEIAGKVKFGDIIEGVSMEEQVDEVTGLSRKVVVESRDADKRPRITIKDEAGKTAKINETTMGRYYLPVGANITVQEDAVVNAGDVIAKIPRETTKTKDITGGLPRVAELFEARKPKDFAVITEIDGIVTFGKDAKGKRKVIVTPEMGEPKEYLIPKGKHISVHEGDHVRAGEALMDGSSNPHDILRVLGQKELAKYLVDEVQEVYRLQGVKINDKHIETIVRQMLRRVRIKDVGDTTLLIDDQLERYIFEDENERVLDKGGKPAIAEPLLLGITKASLSTESFISAASFQETTKVLTQASIEGKIDGLRGLKENVIMGRLIPAGTGLARYRNLKLVAEEPVVTPSEQVEEVAAG.

Zn(2+) contacts are provided by Cys-70, Cys-72, Cys-85, and Cys-88. The Mg(2+) site is built by Asp-460, Asp-462, and Asp-464. Zn(2+) is bound by residues Cys-808, Cys-882, Cys-889, and Cys-892.

The protein belongs to the RNA polymerase beta' chain family. In terms of assembly, the RNAP catalytic core consists of 2 alpha, 1 beta, 1 beta' and 1 omega subunit. When a sigma factor is associated with the core the holoenzyme is formed, which can initiate transcription. Mg(2+) is required as a cofactor. Zn(2+) serves as cofactor.

It catalyses the reaction RNA(n) + a ribonucleoside 5'-triphosphate = RNA(n+1) + diphosphate. Functionally, DNA-dependent RNA polymerase catalyzes the transcription of DNA into RNA using the four ribonucleoside triphosphates as substrates. The sequence is that of DNA-directed RNA polymerase subunit beta' from Geotalea daltonii (strain DSM 22248 / JCM 15807 / FRC-32) (Geobacter daltonii).